We begin with the raw amino-acid sequence, 392 residues long: Dual-specificity RNA methyltransferase RlmN (392 aa).

The active-site Proton acceptor is E116. In terms of domain architecture, Radical SAM core spans 122-364 (EEGRGTLCVS…SPIRTPRGED (243 aa)). C129 and C369 form a disulfide bridge. [4Fe-4S] cluster is bound by residues C136, C140, and C143. S-adenosyl-L-methionine is bound by residues 195–196 (GE), S227, 249–251 (SFH), and N326. C369 serves as the catalytic S-methylcysteine intermediate.

The protein belongs to the radical SAM superfamily. RlmN family. It depends on [4Fe-4S] cluster as a cofactor.

It is found in the cytoplasm. It carries out the reaction adenosine(2503) in 23S rRNA + 2 reduced [2Fe-2S]-[ferredoxin] + 2 S-adenosyl-L-methionine = 2-methyladenosine(2503) in 23S rRNA + 5'-deoxyadenosine + L-methionine + 2 oxidized [2Fe-2S]-[ferredoxin] + S-adenosyl-L-homocysteine. It catalyses the reaction adenosine(37) in tRNA + 2 reduced [2Fe-2S]-[ferredoxin] + 2 S-adenosyl-L-methionine = 2-methyladenosine(37) in tRNA + 5'-deoxyadenosine + L-methionine + 2 oxidized [2Fe-2S]-[ferredoxin] + S-adenosyl-L-homocysteine. In terms of biological role, specifically methylates position 2 of adenine 2503 in 23S rRNA and position 2 of adenine 37 in tRNAs. m2A2503 modification seems to play a crucial role in the proofreading step occurring at the peptidyl transferase center and thus would serve to optimize ribosomal fidelity. The polypeptide is Dual-specificity RNA methyltransferase RlmN (Cereibacter sphaeroides (strain ATCC 17025 / ATH 2.4.3) (Rhodobacter sphaeroides)).